We begin with the raw amino-acid sequence, 151 residues long: Ribosome maturation factor RimP (151 aa).

Belongs to the RimP family.

It localises to the cytoplasm. Its function is as follows. Required for maturation of 30S ribosomal subunits. The polypeptide is Ribosome maturation factor RimP (Aliivibrio fischeri (strain MJ11) (Vibrio fischeri)).